The primary structure comprises 145 residues: uncharacterized protein (145 aa).

The N-terminal stretch at 1 to 23 is a signal peptide; the sequence is MSSSNLSSRKTRISAHFLDAAPA. Residues 123 to 140 traverse the membrane as a helical segment; that stretch reads VLLLIIALVFLLFVAIFI.

The protein resides in the membrane. This is an uncharacterized protein from Archaeoglobus fulgidus (strain ATCC 49558 / DSM 4304 / JCM 9628 / NBRC 100126 / VC-16).